A 194-amino-acid polypeptide reads, in one-letter code: MADKIKDAKIVFVVGGPGSGKGTQCEKIVEKYGYTHLSSGDLLRAEVASGSERGKQLQAIMQKGELVPLDTVLDMIKDAMIAKADVSKGYLIDGYPREVKQGEEFEKKIGAPALLLYIDAKAETMVQRLMKRGQTSGRSDDNEETIKKRLDLYYKATEPVIAYYETRGIVRKINSELPVDEVFAIVVKAIDELK.

Ala-2 is subject to N-acetylalanine. 18-23 (GSGKGT) lines the ATP pocket. The tract at residues 38 to 67 (SSGDLLRAEVASGSERGKQLQAIMQKGELV) is NMP. Residues Ser-39, Arg-44, 65 to 67 (ELV), 94 to 97 (GYPR), and Gln-101 each bind AMP. The interval 131–141 (KRGQTSGRSDD) is LID. Position 132 (Arg-132) interacts with ATP. The AMP site is built by Arg-138 and Arg-149. Leu-177 is a binding site for ATP.

It belongs to the adenylate kinase family. AK1 subfamily. As to quaternary structure, monomer. Mg(2+) serves as cofactor.

It localises to the cytoplasm. It carries out the reaction a ribonucleoside 5'-phosphate + ATP = a ribonucleoside 5'-diphosphate + ADP. The catalysed reaction is AMP + ATP = 2 ADP. It catalyses the reaction dAMP + ATP = dADP + ADP. The enzyme catalyses dATP + AMP = dADP + ADP. It carries out the reaction dAMP + dATP = 2 dADP. The catalysed reaction is a 2'-deoxyribonucleoside 5'-diphosphate + ATP = a 2'-deoxyribonucleoside 5'-triphosphate + ADP. It catalyses the reaction a ribonucleoside 5'-diphosphate + ATP = a ribonucleoside 5'-triphosphate + ADP. The enzyme catalyses CDP + GTP = CTP + GDP. It carries out the reaction GDP + ATP = GTP + ADP. The catalysed reaction is UDP + ATP = UTP + ADP. It catalyses the reaction GTP + UDP = UTP + GDP. The enzyme catalyses dTDP + GTP = dTTP + GDP. It carries out the reaction dCDP + GTP = dCTP + GDP. The catalysed reaction is dGDP + ATP = dGTP + ADP. It catalyses the reaction dADP + GTP = dATP + GDP. The enzyme catalyses thiamine diphosphate + ADP = thiamine triphosphate + AMP. Functionally, catalyzes the reversible transfer of the terminal phosphate group between ATP and AMP. Also displays broad nucleoside diphosphate kinase activity. Plays an important role in cellular energy homeostasis and in adenine nucleotide metabolism. Also catalyzes at a very low rate the synthesis of thiamine triphosphate (ThTP) from thiamine diphosphate (ThDP) and ADP. In Cyprinus carpio (Common carp), this protein is Adenylate kinase isoenzyme 1 (ak1).